Consider the following 58-residue polypeptide: uncharacterized protein (58 aa).

Low complexity predominate over residues 23-51; that stretch reads TTTSTSTTTTSTTTSTTTSTTTTTTTTTT. Residues 23–58 are disordered; it reads TTTSTSTTTTSTTTSTTTSTTTTTTTTTTKDFNTET.

This is an uncharacterized protein from Dictyostelium discoideum (Social amoeba).